The chain runs to 292 residues: Bifunctional protein FolD (292 aa).

NADP(+) contacts are provided by residues 166-168 (GRS), Ser191, and Ile232.

It belongs to the tetrahydrofolate dehydrogenase/cyclohydrolase family. Homodimer.

The enzyme catalyses (6R)-5,10-methylene-5,6,7,8-tetrahydrofolate + NADP(+) = (6R)-5,10-methenyltetrahydrofolate + NADPH. It catalyses the reaction (6R)-5,10-methenyltetrahydrofolate + H2O = (6R)-10-formyltetrahydrofolate + H(+). Its pathway is one-carbon metabolism; tetrahydrofolate interconversion. Catalyzes the oxidation of 5,10-methylenetetrahydrofolate to 5,10-methenyltetrahydrofolate and then the hydrolysis of 5,10-methenyltetrahydrofolate to 10-formyltetrahydrofolate. The polypeptide is Bifunctional protein FolD (Wolbachia sp. subsp. Drosophila simulans (strain wRi)).